The chain runs to 425 residues: 2-methylserine hydroxymethyltransferase (425 aa).

(6S)-5,6,7,8-tetrahydrofolate-binding positions include Leu-126 and 130 to 132; that span reads GHL. Lys-235 carries the N6-(pyridoxal phosphate)lysine modification. Residue Glu-251 coordinates (6S)-5,6,7,8-tetrahydrofolate.

Belongs to the SHMT family. Homodimer. Pyridoxal 5'-phosphate is required as a cofactor.

It localises to the cytoplasm. It catalyses the reaction (6R)-5,10-methylene-5,6,7,8-tetrahydrofolate + D-alanine + H2O = 2-methylserine + (6S)-5,6,7,8-tetrahydrofolate. Its pathway is one-carbon metabolism; tetrahydrofolate interconversion. Its function is as follows. Catalyzes the reversible interconversion of alpha-methyl-L-serine to D-alanine with tetrahydrofolate (THF) serving as the one-carbon carrier. Cannot use alpha-methyl-D-serine, L-serine, D-serine or L-alanine. In Ensifer sp, this protein is 2-methylserine hydroxymethyltransferase.